A 1018-amino-acid chain; its full sequence is Unconventional myosin-Ig (1018 aa).

M1 is modified (N-acetylmethionine). Residues 9-707 (YGKPDFVLLD…TLVTLEQSRA (699 aa)) form the Myosin motor domain. 102–109 (GESGAGKT) lines the ATP pocket. The tract at residues 584–606 (MVALVENLASKEPFYVRCIKPNE) is actin-binding. Positions 710-739 (IPIIVLLLQKAWRGTLARWRCRRLRAIYTI) constitute an IQ domain. Residues 824-1017 (GLRQDWGCRR…RGSFTLLWPS (194 aa)) enclose the TH1 domain.

It belongs to the TRAFAC class myosin-kinesin ATPase superfamily. Myosin family. As to quaternary structure, interacts with calmodulin; via its IQ motifs. As to expression, specifically expressed in hematopoietic cells.

Its subcellular location is the cell membrane. The protein localises to the cell projection. It is found in the phagocytic cup. Functionally, unconventional myosin required during immune response for detection of rare antigen-presenting cells by regulating T-cell migration. Unconventional myosins are actin-based motor molecules with ATPase activity and serve in intracellular movements. Acts as a regulator of T-cell migration by generating membrane tension, enforcing cell-intrinsic meandering search, thereby enhancing detection of rare antigens during lymph-node surveillance, enabling pathogen eradication. Also required in B-cells, where it regulates different membrane/cytoskeleton-dependent processes. Involved in Fc-gamma receptor (Fc-gamma-R) phagocytosis. In terms of biological role, constitutes the minor histocompatibility antigen HA-2. More generally, minor histocompatibility antigens (mHags) refer to immunogenic peptide which, when complexed with MHC, can generate an immune response after recognition by specific T-cells. The peptides are derived from polymorphic intracellular proteins, which are cleaved by normal pathways of antigen processing. The binding of these peptides to MHC class I or class II molecules and their expression on the cell surface can stimulate T-cell responses and thereby trigger graft rejection or graft-versus-host disease (GVHD) after hematopoietic stem cell transplantation from HLA-identical sibling donor. GVHD is a frequent complication after bone marrow transplantation (BMT), due to mismatch of minor histocompatibility antigen in HLA-matched sibling marrow transplants. HA-2 is restricted to MHC class I HLA-A*0201. The chain is Unconventional myosin-Ig (MYO1G) from Homo sapiens (Human).